A 284-amino-acid polypeptide reads, in one-letter code: Pantothenate synthetase (284 aa).

30 to 37 (MGALHDGH) lines the ATP pocket. The active-site Proton donor is the His37. Gln61 provides a ligand contact to (R)-pantoate. Gln61 lines the beta-alanine pocket. 147–150 (GEKD) is an ATP binding site. Gln153 provides a ligand contact to (R)-pantoate. ATP-binding positions include Val176 and 184–187 (KSSR).

This sequence belongs to the pantothenate synthetase family. In terms of assembly, homodimer.

Its subcellular location is the cytoplasm. The catalysed reaction is (R)-pantoate + beta-alanine + ATP = (R)-pantothenate + AMP + diphosphate + H(+). It participates in cofactor biosynthesis; (R)-pantothenate biosynthesis; (R)-pantothenate from (R)-pantoate and beta-alanine: step 1/1. Catalyzes the condensation of pantoate with beta-alanine in an ATP-dependent reaction via a pantoyl-adenylate intermediate. This chain is Pantothenate synthetase, found in Chloroherpeton thalassium (strain ATCC 35110 / GB-78).